Here is a 494-residue protein sequence, read N- to C-terminus: Syntaphilin (494 aa).

The segment at 1–75 is disordered; sequence MAMSLPGSRR…GIKPPTPEQY (75 aa). Low complexity predominate over residues 7–49; that stretch reads GSRRTSAGSRRRTSPPVSVRDAYGTSSLSSSSNSGSYKGSDSS. A coiled-coil region spans residues 79 to 161; it reads LQQKEVCIRH…VKNNLIDKDK (83 aa). 2 disordered regions span residues 191-246 and 338-398; these read MAKE…SGFA and CGTD…GQSV. Phosphoserine is present on residues serine 200 and serine 204. Over residues 207–217 the composition is skewed to polar residues; sequence RSLTRSSTYTK. Threonine 214 carries the phosphothreonine modification. Residue serine 219 is modified to Phosphoserine. Residues 230–246 show a composition bias toward low complexity; the sequence is GDPSSGSAEDGADSGFA. The segment covering 344–353 has biased composition (basic and acidic residues); the sequence is SGDRCPELDA. Residues 425–444 traverse the membrane as a helical segment; it reads YIVDLLAVVVPAVPTVAWLC.

As to quaternary structure, binds to STX1A. Interacts with DNM1; this interaction inhibits the binding of DNM1 to AMPH and DNM1-receptor-mediated endocytosis. As to expression, brain specific. Found in synapses.

It localises to the membrane. The protein resides in the synapse. The protein localises to the synaptosome. In terms of biological role, inhibits SNARE complex formation by absorbing free STX1A. The chain is Syntaphilin from Homo sapiens (Human).